Here is a 275-residue protein sequence, read N- to C-terminus: 2,3,4,5-tetrahydropyridine-2,6-dicarboxylate N-succinyltransferase (275 aa).

Arg106 and Asp143 together coordinate substrate.

The protein belongs to the transferase hexapeptide repeat family. Homotrimer.

Its subcellular location is the cytoplasm. The enzyme catalyses (S)-2,3,4,5-tetrahydrodipicolinate + succinyl-CoA + H2O = (S)-2-succinylamino-6-oxoheptanedioate + CoA. It functions in the pathway amino-acid biosynthesis; L-lysine biosynthesis via DAP pathway; LL-2,6-diaminopimelate from (S)-tetrahydrodipicolinate (succinylase route): step 1/3. The polypeptide is 2,3,4,5-tetrahydropyridine-2,6-dicarboxylate N-succinyltransferase (Rickettsia bellii (strain RML369-C)).